Consider the following 196-residue polypeptide: Adenosylcobinamide-phosphate guanylyltransferase (196 aa).

As to quaternary structure, homodimer.

The enzyme catalyses adenosylcob(III)inamide phosphate + GTP + H(+) = adenosylcob(III)inamide-GDP + diphosphate. Its pathway is cofactor biosynthesis; adenosylcobalamin biosynthesis. Functionally, guanylyltransferase that catalyzes the synthesis of adenosylcobinamide-GDP (AdoCbi-GDP) from adenosylcobinamide-phosphate (AdoCbi-P) and GTP. Is involved in adenosylcobalamin biosynthesis. Binds one GTP per dimer. Cannot use other NTPs or GDP. Does not display AdoCbi kinase activity. Is also able to catalyze the condensation of 2-phospho-L-lactate (LP) with GTP in vitro to form PPi and (2S)-lactyl-2-diphospho-5'-guanosine (LPPG), but is much less efficient than CofC, the presumed enzyme catalyzing this reaction in vivo. This Methanocaldococcus jannaschii (strain ATCC 43067 / DSM 2661 / JAL-1 / JCM 10045 / NBRC 100440) (Methanococcus jannaschii) protein is Adenosylcobinamide-phosphate guanylyltransferase (cobY).